A 751-amino-acid chain; its full sequence is Phosphoribosylformylglycinamidine synthase subunit PurL (751 aa).

The active site involves His54. ATP contacts are provided by Tyr57 and Lys106. Glu108 is a binding site for Mg(2+). Substrate contacts are provided by residues 109-112 (SHNH) and Arg131. His110 (proton acceptor) is an active-site residue. Asp132 contributes to the Mg(2+) binding site. Residue Gln256 coordinates substrate. Asp284 contributes to the Mg(2+) binding site. 328–330 (ESQ) serves as a coordination point for substrate. The ATP site is built by Asp516 and Gly553. Asn554 contributes to the Mg(2+) binding site. A substrate-binding site is contributed by Ser556.

The protein belongs to the FGAMS family. In terms of assembly, monomer. Part of the FGAM synthase complex composed of 1 PurL, 1 PurQ and 2 PurS subunits.

It is found in the cytoplasm. The enzyme catalyses N(2)-formyl-N(1)-(5-phospho-beta-D-ribosyl)glycinamide + L-glutamine + ATP + H2O = 2-formamido-N(1)-(5-O-phospho-beta-D-ribosyl)acetamidine + L-glutamate + ADP + phosphate + H(+). It functions in the pathway purine metabolism; IMP biosynthesis via de novo pathway; 5-amino-1-(5-phospho-D-ribosyl)imidazole from N(2)-formyl-N(1)-(5-phospho-D-ribosyl)glycinamide: step 1/2. Functionally, part of the phosphoribosylformylglycinamidine synthase complex involved in the purines biosynthetic pathway. Catalyzes the ATP-dependent conversion of formylglycinamide ribonucleotide (FGAR) and glutamine to yield formylglycinamidine ribonucleotide (FGAM) and glutamate. The FGAM synthase complex is composed of three subunits. PurQ produces an ammonia molecule by converting glutamine to glutamate. PurL transfers the ammonia molecule to FGAR to form FGAM in an ATP-dependent manner. PurS interacts with PurQ and PurL and is thought to assist in the transfer of the ammonia molecule from PurQ to PurL. This chain is Phosphoribosylformylglycinamidine synthase subunit PurL, found in Nocardioides sp. (strain ATCC BAA-499 / JS614).